The following is a 146-amino-acid chain: MTLKLHDLRPARGSKIARTRVGRGDGSKGKTAGRGTKGTRARKQVPVTFEGGQMPIHMRLPKLKGFRNRFRTEYEIVNVGDINRLFPQGGAVGVDDLVAKGAVRKNALVKVLGDGKLTAKVDVSAHKFSGSARAKITAAGGSATEL.

Residues 1 to 10 (MTLKLHDLRP) are compositionally biased toward basic and acidic residues. Positions 1-41 (MTLKLHDLRPARGSKIARTRVGRGDGSKGKTAGRGTKGTRA) are disordered.

It belongs to the universal ribosomal protein uL15 family. As to quaternary structure, part of the 50S ribosomal subunit.

In terms of biological role, binds to the 23S rRNA. The sequence is that of Large ribosomal subunit protein uL15 from Mycobacterium tuberculosis (strain ATCC 25177 / H37Ra).